The following is a 228-amino-acid chain: Cytochrome c oxidase subunit 2 (228 aa).

The Mitochondrial intermembrane portion of the chain corresponds to 1-26 (MSTWANLGLQDSASPLMEQLIFFHDH). A helical transmembrane segment spans residues 27-48 (ALLILVMITVLVGYLMFMLFFN). Residues 49 to 62 (NYVNRFLLHGQLIE) are Mitochondrial matrix-facing. The chain crosses the membrane as a helical span at residues 63–82 (MIWTILPAIILLFIALPSLR). The Mitochondrial intermembrane segment spans residues 83–228 (LLYLLDEINE…FIKWISSNNS (146 aa)). Residues His161, Cys196, Glu198, Cys200, His204, and Met207 each coordinate Cu cation. Position 198 (Glu198) interacts with Mg(2+).

Belongs to the cytochrome c oxidase subunit 2 family. Component of the cytochrome c oxidase (complex IV, CIV), a multisubunit enzyme composed of a catalytic core of 3 subunits and several supernumerary subunits. The complex exists as a monomer or a dimer and forms supercomplexes (SCs) in the inner mitochondrial membrane with ubiquinol-cytochrome c oxidoreductase (cytochrome b-c1 complex, complex III, CIII). The cofactor is Cu cation.

It is found in the mitochondrion inner membrane. The enzyme catalyses 4 Fe(II)-[cytochrome c] + O2 + 8 H(+)(in) = 4 Fe(III)-[cytochrome c] + 2 H2O + 4 H(+)(out). In terms of biological role, component of the cytochrome c oxidase, the last enzyme in the mitochondrial electron transport chain which drives oxidative phosphorylation. The respiratory chain contains 3 multisubunit complexes succinate dehydrogenase (complex II, CII), ubiquinol-cytochrome c oxidoreductase (cytochrome b-c1 complex, complex III, CIII) and cytochrome c oxidase (complex IV, CIV), that cooperate to transfer electrons derived from NADH and succinate to molecular oxygen, creating an electrochemical gradient over the inner membrane that drives transmembrane transport and the ATP synthase. Cytochrome c oxidase is the component of the respiratory chain that catalyzes the reduction of oxygen to water. Electrons originating from reduced cytochrome c in the intermembrane space (IMS) are transferred via the dinuclear copper A center (CU(A)) of subunit 2 and heme A of subunit 1 to the active site in subunit 1, a binuclear center (BNC) formed by heme A3 and copper B (CU(B)). The BNC reduces molecular oxygen to 2 water molecules using 4 electrons from cytochrome c in the IMS and 4 protons from the mitochondrial matrix. The protein is Cytochrome c oxidase subunit 2 (mt:CoII) of Drosophila yakuba (Fruit fly).